Here is a 272-residue protein sequence, read N- to C-terminus: MNPYIEILRPTNALMAFIAVLLMAIIGHTYNYEIILGSLCVFIATGSGNTINDYYDYEIDRINAPNRPIPSGKIELKRALYYSLILFLVSIILGFIISLENGIVVILCTILMIIYAYDLKQRCFIGNLCVAILTGLTFVFGGLITKDVNLGFILGFFAFLMTLSREIIKDIEDIEGDKKEDAHTLPIIYGTKKAVMLAVILNIITCILSPLLYYYNIFSIVYLIIIIIADIIFVYSAYLAVQNQSKESMHKISKYMKIGMLIAFVSFAMGAL.

8 consecutive transmembrane segments (helical) span residues 16 to 36 (AFIAVLLMAIIGHTYNYEIIL), 79 to 99 (ALYYSLILFLVSIILGFIISL), 100 to 120 (ENGIVVILCTILMIIYAYDLK), 124 to 144 (FIGNLCVAILTGLTFVFGGLI), 148 to 168 (VNLGFILGFFAFLMTLSREII), 194 to 214 (AVMLAVILNIITCILSPLLYY), 217 to 237 (IFSIVYLIIIIIADIIFVYSA), and 252 to 272 (ISKYMKIGMLIAFVSFAMGAL).

The protein belongs to the UbiA prenyltransferase family. DGGGP synthase subfamily. The cofactor is Mg(2+).

The protein resides in the cell membrane. The catalysed reaction is sn-3-O-(geranylgeranyl)glycerol 1-phosphate + (2E,6E,10E)-geranylgeranyl diphosphate = 2,3-bis-O-(geranylgeranyl)-sn-glycerol 1-phosphate + diphosphate. It functions in the pathway membrane lipid metabolism; glycerophospholipid metabolism. Prenyltransferase that catalyzes the transfer of the geranylgeranyl moiety of geranylgeranyl diphosphate (GGPP) to the C2 hydroxyl of (S)-3-O-geranylgeranylglyceryl phosphate (GGGP). This reaction is the second ether-bond-formation step in the biosynthesis of archaeal membrane lipids. This Methanosphaera stadtmanae (strain ATCC 43021 / DSM 3091 / JCM 11832 / MCB-3) protein is Digeranylgeranylglyceryl phosphate synthase.